A 352-amino-acid chain; its full sequence is Fructose-1,6-bisphosphatase class 1 (352 aa).

Residues E111, D133, I135, and D136 each contribute to the Mg(2+) site. Substrate is bound by residues 136 to 139 (DGSS), N228, Y256, and K286. E292 lines the Mg(2+) pocket.

It belongs to the FBPase class 1 family. In terms of assembly, homotetramer. Mg(2+) is required as a cofactor.

It localises to the cytoplasm. It catalyses the reaction beta-D-fructose 1,6-bisphosphate + H2O = beta-D-fructose 6-phosphate + phosphate. Its pathway is carbohydrate biosynthesis; Calvin cycle. In Crocosphaera subtropica (strain ATCC 51142 / BH68) (Cyanothece sp. (strain ATCC 51142)), this protein is Fructose-1,6-bisphosphatase class 1.